Consider the following 1090-residue polypeptide: Pullulanase (1090 aa).

A signal peptide spans 1–19; the sequence is MLRYTRNALVLGSLVLLSG. Cys20 is lipidated: N-palmitoyl cysteine. Cys20 carries S-diacylglycerol cysteine lipidation. Asp684 acts as the Nucleophile in catalysis. Glu713 serves as the catalytic Proton donor.

It belongs to the glycosyl hydrolase 13 family. As to quaternary structure, homotrimer.

Its subcellular location is the cell membrane. The enzyme catalyses Hydrolysis of (1-&gt;6)-alpha-D-glucosidic linkages in pullulan, amylopectin and glycogen, and in the alpha- and beta-limit dextrins of amylopectin and glycogen.. The polypeptide is Pullulanase (pulA) (Klebsiella pneumoniae).